A 316-amino-acid polypeptide reads, in one-letter code: tRNA dimethylallyltransferase (316 aa).

17–24 (GPTASGKT) contacts ATP. 19 to 24 (TASGKT) provides a ligand contact to substrate. Interaction with substrate tRNA stretches follow at residues 42 to 45 (DSAL), 166 to 170 (QRLSR), and 247 to 252 (RCVGYR).

This sequence belongs to the IPP transferase family. As to quaternary structure, monomer. Requires Mg(2+) as cofactor.

It carries out the reaction adenosine(37) in tRNA + dimethylallyl diphosphate = N(6)-dimethylallyladenosine(37) in tRNA + diphosphate. Functionally, catalyzes the transfer of a dimethylallyl group onto the adenine at position 37 in tRNAs that read codons beginning with uridine, leading to the formation of N6-(dimethylallyl)adenosine (i(6)A). The chain is tRNA dimethylallyltransferase from Salmonella schwarzengrund (strain CVM19633).